Here is a 414-residue protein sequence, read N- to C-terminus: EARP and GARP complex-interacting protein 1 (414 aa).

The residue at position 1 (methionine 1) is an N-acetylmethionine. WD repeat units lie at residues 159–199 (TAHG…SQAV), 209–249 (KGQL…QIYC), 253–293 (AHGQ…EPVK), and 297–337 (EHSH…SEPF). The segment at 337–362 (FGHLVDDDDISDQEDHRSEEKSKEPL) is disordered. A Phosphoserine modification is found at serine 347. Over residues 349 to 362 (QEDHRSEEKSKEPL) the composition is skewed to basic and acidic residues. The WD 5 repeat unit spans residues 372 to 412 (EHEDSVYAVDWSSADPWLFASLSYDGRLVINRVPRALKYHI).

The protein belongs to the WD repeat EIPR1 family. Interacts with two multisubunit tethering complexes: EARP composed of VPS50, VPS51, VPS52 and VPS53 subunits and GARP complex composed of VPS51, VPS52, VPS53 and VPS54 subunits. Interacts with SNAP29.

The protein resides in the golgi apparatus. The protein localises to the trans-Golgi network. In terms of biological role, acts as a component of endosomal retrieval machinery that is involved in protein transport from early endosomes to either recycling endosomes or the trans-Golgi network. Mediates the recruitment of Golgi-associated retrograde protein (GARP) complex to the trans-Golgi network and controls early endosome-to-Golgi transport of internalized protein. Promotes the recycling of internalized transferrin receptor (TFRC) to the plasma membrane through interaction with endosome-associated recycling protein (EARP) complex. Controls proper insulin distribution and secretion, and retention of cargo in mature dense core vesicles. Required for the stability of the endosome-associated retrograde protein (EARP) complex subunits and for proper localization and association of EARP with membranes. This is EARP and GARP complex-interacting protein 1 from Pongo abelii (Sumatran orangutan).